The following is a 354-amino-acid chain: Protein RecA (354 aa).

Residue 67–74 coordinates ATP; sequence GPESSGKT.

This sequence belongs to the RecA family.

Its subcellular location is the cytoplasm. In terms of biological role, can catalyze the hydrolysis of ATP in the presence of single-stranded DNA, the ATP-dependent uptake of single-stranded DNA by duplex DNA, and the ATP-dependent hybridization of homologous single-stranded DNAs. It interacts with LexA causing its activation and leading to its autocatalytic cleavage. In Chlamydia muridarum (strain MoPn / Nigg), this protein is Protein RecA.